A 957-amino-acid polypeptide reads, in one-letter code: Dystrophin-related protein 2 (957 aa).

2 Spectrin repeats span residues 102-179 and 231-337; these read DLSG…EELE and EHLL…QLQD. Residues 358-383 enclose the WW domain; the sequence is WERAISPNKVPYYINHQAQTTCWDHP. A ZZ-type; degenerate zinc finger spans residues 605-661; that stretch reads KHQTKCSICRQCPIKGFRYRSLKQFNVDICQTCFLTGRASKGNKLHYPIMEYYTPTT. Residues cysteine 610, cysteine 613, cysteine 634, and cysteine 637 each coordinate Zn(2+). Serine 748 carries the post-translational modification Phosphoserine. A compositionally biased stretch (low complexity) spans 876-894; that stretch reads QPPSESDGNGSAGSSLASS. Residues 876 to 923 are disordered; that stretch reads QPPSESDGNGSAGSSLASSPRQSEGSHPREKGQTTPDTEVADDVGSKS. A Phosphothreonine modification is found at threonine 910.

In terms of assembly, interacts with PRX; this enhances phosphorylation. Identified in a dystroglycan complex that contains at least PRX, DRP2, UTRN, DMD and DAG1. Detected in quadriceps nerve Schwann cells. Detected in sciatic nerve. Detected in trigeminal nerve Schwann cells (at protein level). Detected in brain and spinal cord.

Its subcellular location is the postsynaptic density. It localises to the cell projection. The protein resides in the dendrite. The protein localises to the perikaryon. It is found in the cell membrane. Required for normal myelination and for normal organization of the cytoplasm and the formation of Cajal bands in myelinating Schwann cells. Required for normal PRX location at appositions between the abaxonal surface of the myelin sheath and the Schwann cell plasma membrane. Possibly involved in membrane-cytoskeleton interactions of the central nervous system. The polypeptide is Dystrophin-related protein 2 (Drp2) (Mus musculus (Mouse)).